Here is a 246-residue protein sequence, read N- to C-terminus: Proteasome subunit beta type-4 (246 aa).

Residues 1 to 23 constitute a propeptide that is removed on maturation; it reads MTTFSVPIDNGDSMKIAEEESQR. The active-site Nucleophile is threonine 24.

This sequence belongs to the peptidase T1B family. Component of the 20S core complex of the 26S proteasome. The 26S proteasome is composed of a core protease (CP), known as the 20S proteasome, capped at one or both ends by the 19S regulatory particle (RP/PA700). The 20S proteasome core is composed of 28 subunits that are arranged in four stacked rings, resulting in a barrel-shaped structure. The two end rings are each formed by seven alpha subunits, and the two central rings are each formed by seven beta subunits. The catalytic chamber with the active sites is on the inside of the barrel. As to expression, ubiquitous low levels, higher expression in siliques and flowers.

Its subcellular location is the cytoplasm. The protein localises to the nucleus. Its function is as follows. Non-catalytic component of the proteasome, a multicatalytic proteinase complex which is characterized by its ability to cleave peptides with Arg, Phe, Tyr, Leu, and Glu adjacent to the leaving group at neutral or slightly basic pH. The proteasome has an ATP-dependent proteolytic activity. The polypeptide is Proteasome subunit beta type-4 (PBG1) (Arabidopsis thaliana (Mouse-ear cress)).